Here is a 390-residue protein sequence, read N- to C-terminus: Protein phosphatase methylesterase 1 (390 aa).

The disordered stretch occupies residues 19–50 (FGLSSLSEDPDESESNSNYFSPTPQPPNELRT). One can recognise an AB hydrolase-1 domain in the interval 100–332 (PIFICHHGAG…NLIIGQMQGK (233 aa)). Residues Ser186, Asp213, and His346 contribute to the active site.

This sequence belongs to the AB hydrolase superfamily.

The enzyme catalyses [phosphatase 2A protein]-C-terminal L-leucine methyl ester + H2O = [phosphatase 2A protein]-C-terminal L-leucine + methanol + H(+). Demethylates proteins that have been reversibly carboxymethylated. Demethylates the phosphatase PP2A catalytic subunit. This is Protein phosphatase methylesterase 1 (PPE1) from Debaryomyces hansenii (strain ATCC 36239 / CBS 767 / BCRC 21394 / JCM 1990 / NBRC 0083 / IGC 2968) (Yeast).